We begin with the raw amino-acid sequence, 370 residues long: DNA replication and repair protein RecF (370 aa).

30 to 37 provides a ligand contact to ATP; that stretch reads GENAQGKT.

The protein belongs to the RecF family.

Its subcellular location is the cytoplasm. Functionally, the RecF protein is involved in DNA metabolism; it is required for DNA replication and normal SOS inducibility. RecF binds preferentially to single-stranded, linear DNA. It also seems to bind ATP. The sequence is that of DNA replication and repair protein RecF from Staphylococcus aureus (strain bovine RF122 / ET3-1).